The primary structure comprises 71 residues: Beta-defensin 10 (71 aa).

A signal peptide spans 1-23 (MKTLCSLLLIGCLLFSYDTPVVG). 3 disulfide bridges follow: C37–C66, C44–C59, and C49–C67.

This sequence belongs to the beta-defensin family.

Its subcellular location is the secreted. Its function is as follows. Has antibacterial activity. This is Beta-defensin 10 (Defb10) from Rattus norvegicus (Rat).